Here is a 576-residue protein sequence, read N- to C-terminus: Putative export ATP-binding/permease protein RC1073 (576 aa).

Residues 20–303 (LIIVMISLLS…IFELLSEMHL (284 aa)) form the ABC transmembrane type-1 domain. 6 helical membrane-spanning segments follow: residues 21–41 (IIVM…GSVF), 57–77 (VDNS…ASFF), 135–155 (FLSF…LMFF), 158–178 (FKLA…LIKF), 242–262 (ALFF…VVWI), and 277–297 (IISF…IFEL). Residues 336 to 572 (IEFKNVDFTY…SEIYRNICRE (237 aa)) form the ABC transporter domain. Residue 371-378 (GRSGAGKS) coordinates ATP.

The protein belongs to the ABC transporter superfamily. In terms of assembly, homodimer.

The protein resides in the cell inner membrane. Its function is as follows. Part of an ABC transporter complex. Transmembrane domains (TMD) form a pore in the inner membrane and the ATP-binding domain (NBD) is responsible for energy generation. The polypeptide is Putative export ATP-binding/permease protein RC1073 (Rickettsia conorii (strain ATCC VR-613 / Malish 7)).